The chain runs to 245 residues: Phycocyanobilin:ferredoxin oxidoreductase (245 aa).

The protein belongs to the HY2 family.

The catalysed reaction is (2R,3Z)-phycocyanobilin + 4 oxidized [2Fe-2S]-[ferredoxin] = biliverdin IXalpha + 4 reduced [2Fe-2S]-[ferredoxin] + 4 H(+). Its function is as follows. Catalyzes the four-electron reduction of biliverdin IX-alpha (2-electron reduction at both the A and D rings); the reaction proceeds via an isolatable 2-electron intermediate, 181,182-dihydrobiliverdin. The sequence is that of Phycocyanobilin:ferredoxin oxidoreductase from Trichormus variabilis (strain ATCC 29413 / PCC 7937) (Anabaena variabilis).